Consider the following 414-residue polypeptide: Tryptophan synthase beta chain (414 aa).

Lys-105 carries the N6-(pyridoxal phosphate)lysine modification.

It belongs to the TrpB family. Tetramer of two alpha and two beta chains. Pyridoxal 5'-phosphate is required as a cofactor.

It carries out the reaction (1S,2R)-1-C-(indol-3-yl)glycerol 3-phosphate + L-serine = D-glyceraldehyde 3-phosphate + L-tryptophan + H2O. It functions in the pathway amino-acid biosynthesis; L-tryptophan biosynthesis; L-tryptophan from chorismate: step 5/5. Its function is as follows. The beta subunit is responsible for the synthesis of L-tryptophan from indole and L-serine. The chain is Tryptophan synthase beta chain from Gloeobacter violaceus (strain ATCC 29082 / PCC 7421).